We begin with the raw amino-acid sequence, 181 residues long: ATP synthase subunit b (181 aa).

Residues 24–44 traverse the membrane as a helical segment; sequence LFPNLPNFIAHLLATIILVIV.

The protein belongs to the ATPase B chain family. As to quaternary structure, F-type ATPases have 2 components, F(1) - the catalytic core - and F(0) - the membrane proton channel. F(1) has five subunits: alpha(3), beta(3), gamma(1), delta(1), epsilon(1). F(0) has three main subunits: a(1), b(2) and c(10-14). The alpha and beta chains form an alternating ring which encloses part of the gamma chain. F(1) is attached to F(0) by a central stalk formed by the gamma and epsilon chains, while a peripheral stalk is formed by the delta and b chains.

It localises to the cell membrane. In terms of biological role, f(1)F(0) ATP synthase produces ATP from ADP in the presence of a proton or sodium gradient. F-type ATPases consist of two structural domains, F(1) containing the extramembraneous catalytic core and F(0) containing the membrane proton channel, linked together by a central stalk and a peripheral stalk. During catalysis, ATP synthesis in the catalytic domain of F(1) is coupled via a rotary mechanism of the central stalk subunits to proton translocation. Functionally, component of the F(0) channel, it forms part of the peripheral stalk, linking F(1) to F(0). This is ATP synthase subunit b from Mycoplasma mycoides subsp. mycoides SC (strain CCUG 32753 / NCTC 10114 / PG1).